A 31-amino-acid chain; its full sequence is Cytochrome b6-f complex subunit 6 (31 aa).

Residues 4-24 (ITSFFGFLLAALTITSVLFIG) form a helical membrane-spanning segment.

This sequence belongs to the PetL family. The 4 large subunits of the cytochrome b6-f complex are cytochrome b6, subunit IV (17 kDa polypeptide, PetD), cytochrome f and the Rieske protein, while the 4 small subunits are PetG, PetL, PetM and PetN. The complex functions as a dimer.

The protein resides in the plastid. It localises to the chloroplast thylakoid membrane. Component of the cytochrome b6-f complex, which mediates electron transfer between photosystem II (PSII) and photosystem I (PSI), cyclic electron flow around PSI, and state transitions. PetL is important for photoautotrophic growth as well as for electron transfer efficiency and stability of the cytochrome b6-f complex. The protein is Cytochrome b6-f complex subunit 6 of Oenothera elata subsp. hookeri (Hooker's evening primrose).